A 154-amino-acid polypeptide reads, in one-letter code: Large ribosomal subunit protein uL30 (154 aa).

This sequence belongs to the universal ribosomal protein uL30 family. Part of the 50S ribosomal subunit.

This is Large ribosomal subunit protein uL30 from Methanocaldococcus jannaschii (strain ATCC 43067 / DSM 2661 / JAL-1 / JCM 10045 / NBRC 100440) (Methanococcus jannaschii).